The following is a 159-amino-acid chain: Crossover junction endodeoxyribonuclease RuvC (159 aa).

Active-site residues include aspartate 7, glutamate 67, and aspartate 139. Aspartate 7, glutamate 67, and aspartate 139 together coordinate Mg(2+).

The protein belongs to the RuvC family. As to quaternary structure, homodimer which binds Holliday junction (HJ) DNA. The HJ becomes 2-fold symmetrical on binding to RuvC with unstacked arms; it has a different conformation from HJ DNA in complex with RuvA. In the full resolvosome a probable DNA-RuvA(4)-RuvB(12)-RuvC(2) complex forms which resolves the HJ. The cofactor is Mg(2+).

It localises to the cytoplasm. It catalyses the reaction Endonucleolytic cleavage at a junction such as a reciprocal single-stranded crossover between two homologous DNA duplexes (Holliday junction).. In terms of biological role, the RuvA-RuvB-RuvC complex processes Holliday junction (HJ) DNA during genetic recombination and DNA repair. Endonuclease that resolves HJ intermediates. Cleaves cruciform DNA by making single-stranded nicks across the HJ at symmetrical positions within the homologous arms, yielding a 5'-phosphate and a 3'-hydroxyl group; requires a central core of homology in the junction. The consensus cleavage sequence is 5'-(A/T)TT(C/G)-3'. Cleavage occurs on the 3'-side of the TT dinucleotide at the point of strand exchange. HJ branch migration catalyzed by RuvA-RuvB allows RuvC to scan DNA until it finds its consensus sequence, where it cleaves and resolves the cruciform DNA. This Orientia tsutsugamushi (strain Ikeda) (Rickettsia tsutsugamushi) protein is Crossover junction endodeoxyribonuclease RuvC.